Here is a 402-residue protein sequence, read N- to C-terminus: Ketol-acid reductoisomerase, mitochondrial (402 aa).

A mitochondrion-targeting transit peptide spans 1–26 (MAARNCTKALRPLARQLATPAVQRRT). The 190-residue stretch at 63 to 252 (KEEVHERADW…AVGSGYLYET (190 aa)) folds into the KARI N-terminal Rossmann domain. Residues 90 to 99 (GYGSQGHGQG), 114 to 119 (RKNGKS), and 152 to 156 (SDAAQ) contribute to the NADP(+) site. The active site involves His-177. The KARI C-terminal knotted domain maps to 253–400 (TFEKEVYSDL…KAVRSLRPEN (148 aa)). 4 residues coordinate Mg(2+): Asp-261, Glu-265, Glu-297, and Glu-301. Position 323 (Ser-323) interacts with substrate.

The protein belongs to the ketol-acid reductoisomerase family. Requires Mg(2+) as cofactor.

It is found in the mitochondrion. It catalyses the reaction (2R)-2,3-dihydroxy-3-methylbutanoate + NADP(+) = (2S)-2-acetolactate + NADPH + H(+). The catalysed reaction is (2R,3R)-2,3-dihydroxy-3-methylpentanoate + NADP(+) = (S)-2-ethyl-2-hydroxy-3-oxobutanoate + NADPH + H(+). It functions in the pathway amino-acid biosynthesis; L-isoleucine biosynthesis; L-isoleucine from 2-oxobutanoate: step 2/4. The protein operates within amino-acid biosynthesis; L-valine biosynthesis; L-valine from pyruvate: step 2/4. The chain is Ketol-acid reductoisomerase, mitochondrial (ilv-2) from Neurospora crassa (strain ATCC 24698 / 74-OR23-1A / CBS 708.71 / DSM 1257 / FGSC 987).